The sequence spans 112 residues: Large ribosomal subunit protein bL17 (112 aa).

This sequence belongs to the bacterial ribosomal protein bL17 family. As to quaternary structure, part of the 50S ribosomal subunit. Contacts protein L32.

This Desulforamulus reducens (strain ATCC BAA-1160 / DSM 100696 / MI-1) (Desulfotomaculum reducens) protein is Large ribosomal subunit protein bL17.